The sequence spans 156 residues: Small ribosomal subunit protein uS7c (156 aa).

Belongs to the universal ribosomal protein uS7 family. Part of the 30S ribosomal subunit.

The protein resides in the plastid. It is found in the chloroplast. Functionally, one of the primary rRNA binding proteins, it binds directly to 16S rRNA where it nucleates assembly of the head domain of the 30S subunit. The chain is Small ribosomal subunit protein uS7c (rps7) from Cyanidium caldarium (Red alga).